The sequence spans 285 residues: Elongation factor Ts (285 aa).

The involved in Mg(2+) ion dislocation from EF-Tu stretch occupies residues 84-87; it reads TDFV.

This sequence belongs to the EF-Ts family.

It is found in the cytoplasm. Its function is as follows. Associates with the EF-Tu.GDP complex and induces the exchange of GDP to GTP. It remains bound to the aminoacyl-tRNA.EF-Tu.GTP complex up to the GTP hydrolysis stage on the ribosome. This chain is Elongation factor Ts, found in Bifidobacterium animalis subsp. lactis (strain AD011).